The sequence spans 351 residues: Outer membrane porin protein 32 (351 aa).

The signal sequence occupies residues 1 to 19 (MKKSLIALAVLAASGAAMA). Residue glutamine 20 is modified to Pyrrolidone carboxylic acid.

It to bacterial outer membrane proteins and porins. In terms of assembly, homotrimer.

The protein localises to the cell outer membrane. Forms anion selective channels. The protein is Outer membrane porin protein 32 (omp32) of Delftia acidovorans (Pseudomonas acidovorans).